Here is a 318-residue protein sequence, read N- to C-terminus: Olfactory receptor 13C2 (318 aa).

Topologically, residues 1–25 (MEWENHTILVEFFLKGLSGHPRLEL) are extracellular. N-linked (GlcNAc...) asparagine glycosylation is present at Asn-5. Residues 26 to 46 (LFFVLIFIMYVVILLGNGTLI) form a helical membrane-spanning segment. Residues 47–54 (LISILDPH) are Cytoplasmic-facing. The chain crosses the membrane as a helical span at residues 55 to 75 (LHTPMYFFLGNLSFLDICYTT). The Extracellular portion of the chain corresponds to 76-99 (TSIPSTLVSFLSERKTISLSGCAV). An intrachain disulfide couples Cys-97 to Cys-189. A helical transmembrane segment spans residues 100 to 120 (QMFLGLAMGTTECVLLGMMAF). The Cytoplasmic segment spans residues 121 to 139 (DRYVAICNPLRYPIIMSKD). A helical membrane pass occupies residues 140 to 160 (AYVPMAAGSWIIGAVNSAVQS). Residues 161-197 (VFVVQLPFCRNNIINHFTCEILAVMKLACADISDNEF) lie on the Extracellular side of the membrane. Residues 198-217 (IMLVATTLFILTPLLLIIVS) traverse the membrane as a helical segment. The Cytoplasmic portion of the chain corresponds to 218 to 237 (YTLIIVSIFKISSSEGRSKA). Residues 238–258 (SSTCSAHLTVVIIFYGTILFM) traverse the membrane as a helical segment. Topologically, residues 259 to 277 (YMKPKSKETLNSDDLDATD) are extracellular. Residues 278–298 (KIISMFYGVMTPMMNPLIYSL) form a helical membrane-spanning segment. Residues 299-318 (RNKDVKEAVKHLLNRRFFSK) lie on the Cytoplasmic side of the membrane.

The protein belongs to the G-protein coupled receptor 1 family.

Its subcellular location is the cell membrane. Its function is as follows. Odorant receptor. In Homo sapiens (Human), this protein is Olfactory receptor 13C2 (OR13C2).